The primary structure comprises 315 residues: Voltage-dependent calcium channel gamma-3 subunit (315 aa).

Helical transmembrane passes span 8–28 (IQML…TIAV), 104–124 (SSVF…CVAA), 135–155 (ILSA…GIIV), and 181–201 (FGAF…HIYI). Phosphoserine is present on S248.

The protein belongs to the PMP-22/EMP/MP20 family. CACNG subfamily. The L-type calcium channel is composed of five subunits: alpha-1, alpha-2/delta, beta and gamma. Acts as an auxiliary subunit for AMPA-selective glutamate receptors (AMPARs). Found in a complex with GRIA1, GRIA2, GRIA3, GRIA4, CNIH2, CNIH3, CACNG2, CACNG4, CACNG5, CACNG7 and CACNG8. Interacts with AP4M1 and GRIA1; associates GRIA1 with the adaptor protein complex 4 (AP-4) to target GRIA1 to the somatodendritic compartment of neurons.

The protein resides in the membrane. Its function is as follows. Regulates the trafficking to the somatodendritic compartment and gating properties of AMPA-selective glutamate receptors (AMPARs). Promotes their targeting to the cell membrane and synapses and modulates their gating properties by slowing their rates of activation, deactivation and desensitization. Does not show subunit-specific AMPA receptor regulation and regulates all AMPAR subunits. Thought to stabilize the calcium channel in an inactivated (closed) state. In Homo sapiens (Human), this protein is Voltage-dependent calcium channel gamma-3 subunit (CACNG3).